The following is a 137-amino-acid chain: Peptide methionine sulfoxide reductase MsrB (137 aa).

The 123-residue stretch at 7–129 (PEELKNGLSE…NSASLSFTDE (123 aa)) folds into the MsrB domain. Zn(2+)-binding residues include C46, C49, C95, and C98. The Nucleophile role is filled by C118.

Belongs to the MsrB Met sulfoxide reductase family. It depends on Zn(2+) as a cofactor.

It catalyses the reaction L-methionyl-[protein] + [thioredoxin]-disulfide + H2O = L-methionyl-(R)-S-oxide-[protein] + [thioredoxin]-dithiol. The polypeptide is Peptide methionine sulfoxide reductase MsrB (Klebsiella pneumoniae subsp. pneumoniae (strain ATCC 700721 / MGH 78578)).